Here is a 342-residue protein sequence, read N- to C-terminus: tRNA-specific 2-thiouridylase MnmA (342 aa).

ATP-binding positions include 6-13 (LLSGGVDS) and L32. C92 serves as the catalytic Nucleophile. A disulfide bridge links C92 with C191. G116 lines the ATP pocket. Positions 138 to 140 (KDQ) are interaction with tRNA. C191 functions as the Cysteine persulfide intermediate in the catalytic mechanism. Residues 293–294 (RY) form an interaction with tRNA region.

It belongs to the MnmA/TRMU family.

The protein resides in the cytoplasm. The catalysed reaction is S-sulfanyl-L-cysteinyl-[protein] + uridine(34) in tRNA + AH2 + ATP = 2-thiouridine(34) in tRNA + L-cysteinyl-[protein] + A + AMP + diphosphate + H(+). Its function is as follows. Catalyzes the 2-thiolation of uridine at the wobble position (U34) of tRNA, leading to the formation of s(2)U34. In Helicobacter acinonychis (strain Sheeba), this protein is tRNA-specific 2-thiouridylase MnmA.